We begin with the raw amino-acid sequence, 252 residues long: 5'-nucleotidase SurE (252 aa).

The a divalent metal cation site is built by aspartate 8, aspartate 9, serine 39, and asparagine 91.

It belongs to the SurE nucleotidase family. Requires a divalent metal cation as cofactor.

Its subcellular location is the cytoplasm. The enzyme catalyses a ribonucleoside 5'-phosphate + H2O = a ribonucleoside + phosphate. In terms of biological role, nucleotidase that shows phosphatase activity on nucleoside 5'-monophosphates. The chain is 5'-nucleotidase SurE from Gemmatimonas aurantiaca (strain DSM 14586 / JCM 11422 / NBRC 100505 / T-27).